A 256-amino-acid polypeptide reads, in one-letter code: MGNMTVKQIEKSVEGLDLDKALEKLYCLKAEFGDRVDKIIEKYEKKKLKYEKELNRYLEMCIYEKEAYQRGYKLIAGIDEAGRGPLAGPVVAAAVILPQDVFIEGLNDSKKLTENQREKLFDVINDKAIGVGIGIVDEKQIDEINILNATKKAMKLAVGNLKPVPDILFIDSLKLDDINIEQNSIVKGDAKSVSIAAASIIAKVTRDRILREMDKKYPMYGFARHKGYGTGEHIEAIKKYGICPIHRVSFTKNFIV.

The 184-residue stretch at 73–256 (KLIAGIDEAG…RVSFTKNFIV (184 aa)) folds into the RNase H type-2 domain. A divalent metal cation-binding residues include aspartate 79, glutamate 80, and aspartate 171.

It belongs to the RNase HII family. It depends on Mn(2+) as a cofactor. The cofactor is Mg(2+).

It is found in the cytoplasm. It carries out the reaction Endonucleolytic cleavage to 5'-phosphomonoester.. Endonuclease that specifically degrades the RNA of RNA-DNA hybrids. In Acetivibrio thermocellus (strain ATCC 27405 / DSM 1237 / JCM 9322 / NBRC 103400 / NCIMB 10682 / NRRL B-4536 / VPI 7372) (Clostridium thermocellum), this protein is Ribonuclease HII.